The following is a 139-amino-acid chain: Protein Turandot B (139 aa).

An N-terminal signal peptide occupies residues 1–21 (MNFKTALICFALLLIGTLCSA).

It belongs to the Turandot family.

The protein localises to the secreted. In terms of biological role, a humoral factor that may play a role in stress tolerance. In Drosophila simulans (Fruit fly), this protein is Protein Turandot B.